Here is a 255-residue protein sequence, read N- to C-terminus: Imidazole glycerol phosphate synthase subunit HisF (255 aa).

Catalysis depends on residues Asp-12 and Asp-131.

Belongs to the HisA/HisF family. In terms of assembly, heterodimer of HisH and HisF.

The protein resides in the cytoplasm. It catalyses the reaction 5-[(5-phospho-1-deoxy-D-ribulos-1-ylimino)methylamino]-1-(5-phospho-beta-D-ribosyl)imidazole-4-carboxamide + L-glutamine = D-erythro-1-(imidazol-4-yl)glycerol 3-phosphate + 5-amino-1-(5-phospho-beta-D-ribosyl)imidazole-4-carboxamide + L-glutamate + H(+). It functions in the pathway amino-acid biosynthesis; L-histidine biosynthesis; L-histidine from 5-phospho-alpha-D-ribose 1-diphosphate: step 5/9. Functionally, IGPS catalyzes the conversion of PRFAR and glutamine to IGP, AICAR and glutamate. The HisF subunit catalyzes the cyclization activity that produces IGP and AICAR from PRFAR using the ammonia provided by the HisH subunit. In Salinispora arenicola (strain CNS-205), this protein is Imidazole glycerol phosphate synthase subunit HisF.